The primary structure comprises 294 residues: 33 kDa chaperonin (294 aa).

2 disulfide bridges follow: cysteine 235-cysteine 237 and cysteine 268-cysteine 271.

This sequence belongs to the HSP33 family. Under oxidizing conditions two disulfide bonds are formed involving the reactive cysteines. Under reducing conditions zinc is bound to the reactive cysteines and the protein is inactive.

The protein resides in the cytoplasm. In terms of biological role, redox regulated molecular chaperone. Protects both thermally unfolding and oxidatively damaged proteins from irreversible aggregation. Plays an important role in the bacterial defense system toward oxidative stress. This is 33 kDa chaperonin from Proteus mirabilis (strain HI4320).